Here is a 279-residue protein sequence, read N- to C-terminus: Large ribosomal subunit protein uL2 (279 aa).

Residues 223–279 (MAMNPVDHPMGGGEGKSKSGGGRKHPKSPWGQLAKGLKTRNKKKASSKLIVRGRKSK) form a disordered region. Over residues 232 to 242 (MGGGEGKSKSG) the composition is skewed to gly residues. Over residues 259-279 (LKTRNKKKASSKLIVRGRKSK) the composition is skewed to basic residues.

This sequence belongs to the universal ribosomal protein uL2 family. Part of the 50S ribosomal subunit. Forms a bridge to the 30S subunit in the 70S ribosome.

Its function is as follows. One of the primary rRNA binding proteins. Required for association of the 30S and 50S subunits to form the 70S ribosome, for tRNA binding and peptide bond formation. It has been suggested to have peptidyltransferase activity; this is somewhat controversial. Makes several contacts with the 16S rRNA in the 70S ribosome. In Prosthecochloris aestuarii (strain DSM 271 / SK 413), this protein is Large ribosomal subunit protein uL2.